We begin with the raw amino-acid sequence, 530 residues long: UDP-glucuronosyltransferase 2B31 (530 aa).

The first 24 residues, 1–24 (MSMKWISVLLGLQLSCYFSSGSCG), serve as a signal peptide directing secretion. N6-succinyllysine is present on Lys-136. Asn-316 carries N-linked (GlcNAc...) asparagine glycosylation. Residues 495–515 (IGFLLACVATAIFVTTQCCLF) traverse the membrane as a helical segment.

Belongs to the UDP-glycosyltransferase family.

Its subcellular location is the microsome membrane. It is found in the endoplasmic reticulum membrane. It catalyses the reaction glucuronate acceptor + UDP-alpha-D-glucuronate = acceptor beta-D-glucuronoside + UDP + H(+). In terms of biological role, UDPGTs are of major importance in the conjugation and subsequent elimination of potentially toxic xenobiotics and endogenous compounds. This isozyme has glucuronidating capacity on phenols, opioids, and carboxylic acid-containing drugs. This is UDP-glucuronosyltransferase 2B31 (UGT2B31) from Canis lupus familiaris (Dog).